Here is a 112-residue protein sequence, read N- to C-terminus: Secretoglobin family 2B member 20 (112 aa).

The first 23 residues, 1 to 23 (MKGTLLLLGLLVTGELSFQTTEA), serve as a signal peptide directing secretion. N-linked (GlcNAc...) asparagine glycosylation occurs at asparagine 50.

It belongs to the secretoglobin family. Expressed in lacrimal gland, at higher level in males than females. Expressed in the submandibular gland.

It localises to the secreted. The chain is Secretoglobin family 2B member 20 (Scgb2b20) from Mus musculus (Mouse).